The sequence spans 689 residues: Glycine--tRNA ligase beta subunit (689 aa).

Belongs to the class-II aminoacyl-tRNA synthetase family. As to quaternary structure, tetramer of two alpha and two beta subunits.

Its subcellular location is the cytoplasm. It catalyses the reaction tRNA(Gly) + glycine + ATP = glycyl-tRNA(Gly) + AMP + diphosphate. The protein is Glycine--tRNA ligase beta subunit of Citrobacter koseri (strain ATCC BAA-895 / CDC 4225-83 / SGSC4696).